Consider the following 116-residue polypeptide: MAGFGLPNFGQLTEAFKKAKQIQQDAQKLQDELENMEIEGESDDEMVKVWISGNQLPLRVEVQENILNSDKEKIEQNILQAIQKAHELSTTTMKERMNDLTGGLNLNLPGFDNTDS.

The protein belongs to the YbaB/EbfC family. Homodimer.

It localises to the cytoplasm. The protein resides in the nucleoid. In terms of biological role, binds to DNA and alters its conformation. May be involved in regulation of gene expression, nucleoid organization and DNA protection. The polypeptide is Nucleoid-associated protein PMT9312_0020 (Prochlorococcus marinus (strain MIT 9312)).